The chain runs to 383 residues: Succinyl-diaminopimelate desuccinylase (383 aa).

Histidine 72 contributes to the Zn(2+) binding site. The active site involves aspartate 74. Residue aspartate 105 participates in Zn(2+) binding. Catalysis depends on glutamate 137, which acts as the Proton acceptor. Zn(2+)-binding residues include glutamate 138, glutamate 167, and histidine 352.

The protein belongs to the peptidase M20A family. DapE subfamily. Homodimer. Zn(2+) is required as a cofactor. The cofactor is Co(2+).

It catalyses the reaction N-succinyl-(2S,6S)-2,6-diaminopimelate + H2O = (2S,6S)-2,6-diaminopimelate + succinate. Its pathway is amino-acid biosynthesis; L-lysine biosynthesis via DAP pathway; LL-2,6-diaminopimelate from (S)-tetrahydrodipicolinate (succinylase route): step 3/3. Its function is as follows. Catalyzes the hydrolysis of N-succinyl-L,L-diaminopimelic acid (SDAP), forming succinate and LL-2,6-diaminopimelate (DAP), an intermediate involved in the bacterial biosynthesis of lysine and meso-diaminopimelic acid, an essential component of bacterial cell walls. The chain is Succinyl-diaminopimelate desuccinylase from Ehrlichia ruminantium (strain Welgevonden).